The chain runs to 596 residues: Serine/threonine-protein kinase PknH (596 aa).

The Cytoplasmic portion of the chain corresponds to 1-373 (MSDAQDSRVG…QTPRKTNPWP (373 aa)). One can recognise a Protein kinase domain in the interval 16–276 (YHLKRLLGRG…DLALAAHEAL (261 aa)). ATP is bound by residues 22–30 (LGRGGMGEV) and K45. Residue D139 is the Proton acceptor of the active site. Position 170 is a phosphothreonine (T170). The tract at residues 292-368 (QESTLPGTAA…PSPWAQTPRK (77 aa)) is disordered. Residues 307–318 (PTMPTVTPPPIQ) show a composition bias toward pro residues. A helical membrane pass occupies residues 374 to 394 (LVAGAAAVVLVLVLGAIGIWI). The Extracellular segment spans residues 395–596 (ANRPKPVQPP…AKIVDKVNKE (202 aa)).

The protein belongs to the protein kinase superfamily. Ser/Thr protein kinase family. Post-translationally, autophosphorylated on threonine and serine residues.

It localises to the cell membrane. The enzyme catalyses L-seryl-[protein] + ATP = O-phospho-L-seryl-[protein] + ADP + H(+). It catalyses the reaction L-threonyl-[protein] + ATP = O-phospho-L-threonyl-[protein] + ADP + H(+). The chain is Serine/threonine-protein kinase PknH (pknH) from Mycobacterium bovis (strain ATCC BAA-935 / AF2122/97).